The chain runs to 379 residues: MMRKKSFWLGMLTAFMLVFTMAFSDSASAAQPAKNVEKDYIVGFKSGVKTASVKKDIIKESGGKVDKQFRIINAAKAKLDKEALKEVKNDPDVAYVEEDHVAHALAQTVPYGIPLIKADKVQAQGFKGANVKVAVLDTGIQASHPDLNVVGGASFVAGEAYNTDGNGHGTHVAGTVAALDNTTGVLGVAPSVSLYAVKVLNSSGSGSYSGIVSGIEWATTNGMDVINMSLGGASGSTAMKQAVDNAYAKGVVVVAAAGNSGSSGNTNTIGYPAKYDSVIAVGAVDSNSNRASFSSVGAELEVMAPGAGVYSTYPTNTYATLNGTSMASPHVAGAAALILSKHPNLSASQVRNRLSSTATYLGSSFYYGKGLINVEAAAQ.

The signal sequence occupies residues 1–29 (MMRKKSFWLGMLTAFMLVFTMAFSDSASA). A propeptide spanning residues 30 to 105 (AQPAKNVEKD…VEEDHVAHAL (76 aa)) is cleaved from the precursor. Positions 44–102 (FKSGVKTASVKKDIIKESGGKVDKQFRIINAAKAKLDKEALKEVKNDPDVAYVEEDHVA) constitute an Inhibitor I9 domain. Position 107 (Q107) interacts with Ca(2+). In terms of domain architecture, Peptidase S8 spans 110 to 378 (PYGIPLIKAD…KGLINVEAAA (269 aa)). The Charge relay system role is filled by D137. D146 contributes to the Ca(2+) binding site. The active-site Charge relay system is H168. L179, N181, T183, V185, A273, Y275, and V278 together coordinate Ca(2+). Catalysis depends on S325, which acts as the Charge relay system.

This sequence belongs to the peptidase S8 family. Requires Ca(2+) as cofactor.

The protein localises to the secreted. It catalyses the reaction Hydrolysis of proteins with broad specificity for peptide bonds, and a preference for a large uncharged residue in P1. Hydrolyzes peptide amides.. With respect to regulation, inhibited by p-chlorophenyl and 1-naphthyl boronic acid derivatives. In terms of biological role, subtilisin is an extracellular alkaline serine protease, it catalyzes the hydrolysis of proteins and peptide amides. Shows high specificity for aromatic and hydrophobic amino acids in the P1 substrate position. May play an important role in the degradation of feather keratin. The sequence is that of Subtilisin Carlsberg from Bacillus licheniformis.